We begin with the raw amino-acid sequence, 228 residues long: PKHD-type hydroxylase RPE_4577 (228 aa).

The Fe2OG dioxygenase domain occupies 78-180; sequence TIFPPLFNRY…RIASFFWTQS (103 aa). Residues His98, Asp100, and His161 each contribute to the Fe cation site. 2-oxoglutarate is bound at residue Arg171.

Fe(2+) is required as a cofactor. The cofactor is L-ascorbate.

The polypeptide is PKHD-type hydroxylase RPE_4577 (Rhodopseudomonas palustris (strain BisA53)).